A 221-amino-acid polypeptide reads, in one-letter code: Translation initiation factor 6 (221 aa).

The protein belongs to the eIF-6 family.

Binds to the 50S ribosomal subunit and prevents its association with the 30S ribosomal subunit to form the 70S initiation complex. This is Translation initiation factor 6 from Nitrosopumilus maritimus (strain SCM1).